The following is a 192-amino-acid chain: Leucine-rich repeat-containing protein 51 (192 aa).

LRR repeat units follow at residues 49–71 (SLTQ…NQVV), 80–101 (NLAW…LTTF), and 103–124 (NLSV…NKLA). In terms of domain architecture, LRRCT spans 137 to 175 (NPIEEEKGYRQYVLCNLPRITTFDFSGVTKADRSTAEVW).

Its subcellular location is the cytoplasm. The protein is Leucine-rich repeat-containing protein 51 of Rattus norvegicus (Rat).